The primary structure comprises 143 residues: Aspartate 1-decarboxylase (143 aa).

The active-site Schiff-base intermediate with substrate; via pyruvic acid is the Ser-25. Ser-25 is subject to Pyruvic acid (Ser). Thr-57 serves as a coordination point for substrate. Tyr-58 functions as the Proton donor in the catalytic mechanism. 73-75 (GAA) lines the substrate pocket.

It belongs to the PanD family. As to quaternary structure, heterooctamer of four alpha and four beta subunits. It depends on pyruvate as a cofactor. Post-translationally, is synthesized initially as an inactive proenzyme, which is activated by self-cleavage at a specific serine bond to produce a beta-subunit with a hydroxyl group at its C-terminus and an alpha-subunit with a pyruvoyl group at its N-terminus.

The protein localises to the cytoplasm. The catalysed reaction is L-aspartate + H(+) = beta-alanine + CO2. Its pathway is cofactor biosynthesis; (R)-pantothenate biosynthesis; beta-alanine from L-aspartate: step 1/1. Catalyzes the pyruvoyl-dependent decarboxylation of aspartate to produce beta-alanine. This Mycobacterium ulcerans (strain Agy99) protein is Aspartate 1-decarboxylase.